We begin with the raw amino-acid sequence, 444 residues long: UDP-N-acetylmuramoylalanine--D-glutamate ligase (444 aa).

118 to 124 contributes to the ATP binding site; it reads GTNGKTT.

This sequence belongs to the MurCDEF family.

The protein resides in the cytoplasm. The catalysed reaction is UDP-N-acetyl-alpha-D-muramoyl-L-alanine + D-glutamate + ATP = UDP-N-acetyl-alpha-D-muramoyl-L-alanyl-D-glutamate + ADP + phosphate + H(+). The protein operates within cell wall biogenesis; peptidoglycan biosynthesis. In terms of biological role, cell wall formation. Catalyzes the addition of glutamate to the nucleotide precursor UDP-N-acetylmuramoyl-L-alanine (UMA). The chain is UDP-N-acetylmuramoylalanine--D-glutamate ligase from Protochlamydia amoebophila (strain UWE25).